The following is a 35-amino-acid chain: Photosystem II reaction center protein T (35 aa).

Residues 3 to 23 (ALVYTFLLVSTLGIIFFAIFF) traverse the membrane as a helical segment.

The protein belongs to the PsbT family. PSII is composed of 1 copy each of membrane proteins PsbA, PsbB, PsbC, PsbD, PsbE, PsbF, PsbH, PsbI, PsbJ, PsbK, PsbL, PsbM, PsbT, PsbY, PsbZ, Psb30/Ycf12, at least 3 peripheral proteins of the oxygen-evolving complex and a large number of cofactors. It forms dimeric complexes.

The protein resides in the plastid. The protein localises to the chloroplast thylakoid membrane. Its function is as follows. Found at the monomer-monomer interface of the photosystem II (PS II) dimer, plays a role in assembly and dimerization of PSII. PSII is a light-driven water plastoquinone oxidoreductase, using light energy to abstract electrons from H(2)O, generating a proton gradient subsequently used for ATP formation. The sequence is that of Photosystem II reaction center protein T from Nelumbo lutea (American lotus).